The following is a 234-amino-acid chain: 1-(5-phosphoribosyl)-5-[(5-phosphoribosylamino)methylideneamino] imidazole-4-carboxamide isomerase (234 aa).

The active-site Proton acceptor is Asp-9. Asp-131 (proton donor) is an active-site residue.

This sequence belongs to the HisA/HisF family.

It localises to the cytoplasm. It catalyses the reaction 1-(5-phospho-beta-D-ribosyl)-5-[(5-phospho-beta-D-ribosylamino)methylideneamino]imidazole-4-carboxamide = 5-[(5-phospho-1-deoxy-D-ribulos-1-ylimino)methylamino]-1-(5-phospho-beta-D-ribosyl)imidazole-4-carboxamide. It participates in amino-acid biosynthesis; L-histidine biosynthesis; L-histidine from 5-phospho-alpha-D-ribose 1-diphosphate: step 4/9. The polypeptide is 1-(5-phosphoribosyl)-5-[(5-phosphoribosylamino)methylideneamino] imidazole-4-carboxamide isomerase (Staphylococcus aureus (strain NCTC 8325 / PS 47)).